The primary structure comprises 102 residues: Large ribosomal subunit protein bL21 (102 aa).

Belongs to the bacterial ribosomal protein bL21 family. As to quaternary structure, part of the 50S ribosomal subunit. Contacts protein L20.

This protein binds to 23S rRNA in the presence of protein L20. The sequence is that of Large ribosomal subunit protein bL21 from Arthrobacter sp. (strain FB24).